Consider the following 116-residue polypeptide: Hydrogenase maturation factor HypA (116 aa).

Residue His-2 participates in Ni(2+) binding. Zn(2+) contacts are provided by Cys-73, Cys-76, Cys-89, and Cys-92.

It belongs to the HypA/HybF family.

Its function is as follows. Involved in the maturation of [NiFe] hydrogenases. Required for nickel insertion into the metal center of the hydrogenase. The chain is Hydrogenase maturation factor HypA from Chlorobium limicola (strain DSM 245 / NBRC 103803 / 6330).